Reading from the N-terminus, the 504-residue chain is 2-methylcitrate dehydratase 2 (504 aa).

The protein belongs to the PrpD family. In terms of assembly, monomer.

The catalysed reaction is (2S,3S)-2-methylcitrate = 2-methyl-cis-aconitate + H2O. It carries out the reaction citrate = D-threo-isocitrate. The protein operates within organic acid metabolism; propanoate degradation. It participates in carbohydrate metabolism; tricarboxylic acid cycle; isocitrate from oxaloacetate: step 1/2. In terms of biological role, involved in the catabolism of short chain fatty acids (SCFA) via the 2-methylcitrate cycle I (propionate degradation route). Catalyzes the dehydration of 2-methylcitrate (2-MC) to yield the cis isomer 2-methyl-aconitate. Could also catalyze the dehydration of citrate and the hydration of cis-aconitate. The protein is 2-methylcitrate dehydratase 2 (prpD2) of Corynebacterium glutamicum (strain ATCC 13032 / DSM 20300 / JCM 1318 / BCRC 11384 / CCUG 27702 / LMG 3730 / NBRC 12168 / NCIMB 10025 / NRRL B-2784 / 534).